We begin with the raw amino-acid sequence, 142 residues long: MSSRFAGGNAYQRDTGRTQLFGPADGSNSLDDNVSSALGSTDKLDYSQSTLASLESQSEEQMGAMGQRIKALKSLSLKMGDEIRGSNQTIDQLGDTFHNTSVKLKRTFGNMMEMARRSGISIKTWLIIFFMVGVLFFWVWIT.

Positions M1–S36 are disordered. At M1–R117 the chain is on the cytoplasmic side. Polar residues predominate over residues G26–S36. The t-SNARE coiled-coil homology domain maps to A52–M114. A helical; Anchor for type IV membrane protein membrane pass occupies residues S118 to I141. A topological domain (vesicular) is located at residue T142.

This sequence belongs to the BET1 family. In terms of assembly, component of a SNARE complex consisting of SED5, BOS1, BET1 and SEC22 or YKT6. Interacts with SEC24.

It is found in the golgi apparatus membrane. The protein resides in the endoplasmic reticulum membrane. Functionally, SNARE required for targeting and fusion of ER-derived transport vesicles with the Golgi complex. The sequence is that of Protein transport protein BET1 (BET1) from Saccharomyces cerevisiae (strain ATCC 204508 / S288c) (Baker's yeast).